The following is a 219-amino-acid chain: Casparian strip membrane protein 3 (219 aa).

Positions 1-43 (MDPGREDEVPLAATSPESRRTRSNGRGKATVGDAPPPAETVVS) are disordered. Residues 1-57 (MDPGREDEVPLAATSPESRRTRSNGRGKATVGDAPPPAETVVSTKAAPLPTGGWKKG) lie on the Cytoplasmic side of the membrane. The chain crosses the membrane as a helical span at residues 58–78 (IAILDFILRLGAIGAAMGASI). Residues 79-108 (LMGTNEQILPFFTQFLQFHAQWDDFPVFKL) lie on the Extracellular side of the membrane. The helical transmembrane segment at 109–129 (FVVLNALAGGFLILSLPLSIV) threads the bilayer. The Cytoplasmic segment spans residues 130-147 (CIVRPLAVGPRFLLLITD). Residues 148-168 (LVNMATVIAAASAAAAIVYVA) form a helical membrane-spanning segment. Topologically, residues 169 to 193 (HNGSQDANWIAICQQFTDFCQGTSE) are extracellular. The N-linked (GlcNAc...) asparagine glycan is linked to N170. The chain crosses the membrane as a helical span at residues 194–214 (AVVVSFVAAVFLVCLIVVSTL). Residues 215 to 219 (ALKRT) are Cytoplasmic-facing.

Belongs to the Casparian strip membrane proteins (CASP) family. In terms of assembly, homodimer and heterodimers.

It localises to the cell membrane. Its function is as follows. Regulates membrane-cell wall junctions and localized cell wall deposition. Required for establishment of the Casparian strip membrane domain (CSD) and the subsequent formation of Casparian strips, a cell wall modification of the root endodermis that determines an apoplastic barrier between the intraorganismal apoplasm and the extraorganismal apoplasm and prevents lateral diffusion. This chain is Casparian strip membrane protein 3, found in Lotus japonicus (Lotus corniculatus var. japonicus).